The chain runs to 124 residues: ATP synthase subunit H, mitochondrial (124 aa).

A mitochondrion-targeting transit peptide spans 1–32; sequence MFPIASRRILLNASVLPLRLCNRNFTTTRISY. A disordered region spans residues 89 to 124; it reads NVETAHVAKESEEGESEPIEEDWLVLDDAEETKESH. The span at 100 to 124 shows a compositional bias: acidic residues; it reads EEGESEPIEEDWLVLDDAEETKESH.

Belongs to the ATPase h subunit family. F-type ATPases have 2 components, CF(1) - the catalytic core - and CF(0) - the membrane proton channel. In yeast, the dimeric form of ATP synthase consists of 17 polypeptides: alpha, beta, gamma, delta, epsilon, 4 (B), 5 (OSCP), 6 (A), 8, 9 (C), d, E (Tim11), f, g, h, i/j and k.

It localises to the mitochondrion. Its subcellular location is the mitochondrion inner membrane. Functionally, mitochondrial membrane ATP synthase (F(1)F(0) ATP synthase or Complex V) produces ATP from ADP in the presence of a proton gradient across the membrane which is generated by electron transport complexes of the respiratory chain. F-type ATPases consist of two structural domains, F(1) - containing the extramembraneous catalytic core and F(0) - containing the membrane proton channel, linked together by a central stalk and a peripheral stalk. During catalysis, ATP synthesis in the catalytic domain of F(1) is coupled via a rotary mechanism of the central stalk subunits to proton translocation. Part of the complex F(0) domain. Minor subunit located with subunit a in the membrane. The polypeptide is ATP synthase subunit H, mitochondrial (ATP14) (Saccharomyces cerevisiae (strain ATCC 204508 / S288c) (Baker's yeast)).